The chain runs to 507 residues: ATP synthase subunit alpha, plastid (507 aa).

Position 170–177 (170–177 (GDRQTGKT)) interacts with ATP.

It belongs to the ATPase alpha/beta chains family. In terms of assembly, F-type ATPases have 2 components, CF(1) - the catalytic core - and CF(0) - the membrane proton channel. CF(1) has five subunits: alpha(3), beta(3), gamma(1), delta(1), epsilon(1). CF(0) has four main subunits: a, b, b' and c.

The protein localises to the plastid membrane. The catalysed reaction is ATP + H2O + 4 H(+)(in) = ADP + phosphate + 5 H(+)(out). Produces ATP from ADP in the presence of a proton gradient across the membrane. The alpha chain is a regulatory subunit. The polypeptide is ATP synthase subunit alpha, plastid (Cuscuta gronovii (Common dodder)).